An 876-amino-acid polypeptide reads, in one-letter code: Alanine--tRNA ligase (876 aa).

4 residues coordinate Zn(2+): His565, His569, Cys667, and His671.

It belongs to the class-II aminoacyl-tRNA synthetase family. Requires Zn(2+) as cofactor.

It is found in the cytoplasm. It carries out the reaction tRNA(Ala) + L-alanine + ATP = L-alanyl-tRNA(Ala) + AMP + diphosphate. Functionally, catalyzes the attachment of alanine to tRNA(Ala) in a two-step reaction: alanine is first activated by ATP to form Ala-AMP and then transferred to the acceptor end of tRNA(Ala). Also edits incorrectly charged Ser-tRNA(Ala) and Gly-tRNA(Ala) via its editing domain. In Staphylococcus aureus (strain MRSA252), this protein is Alanine--tRNA ligase.